We begin with the raw amino-acid sequence, 83 residues long: Cytochrome b559 subunit alpha (83 aa).

A helical transmembrane segment spans residues 22-36 (VIHSITIPALFIAGW). Heme is bound at residue His24.

Belongs to the PsbE/PsbF family. As to quaternary structure, heterodimer of an alpha subunit and a beta subunit. PSII is composed of 1 copy each of membrane proteins PsbA, PsbB, PsbC, PsbD, PsbE, PsbF, PsbH, PsbI, PsbJ, PsbK, PsbL, PsbM, PsbT, PsbX, PsbY, PsbZ, Psb30/Ycf12, peripheral proteins PsbO, CyanoQ (PsbQ), PsbU, PsbV and a large number of cofactors. It forms dimeric complexes. Heme b is required as a cofactor.

The protein localises to the cellular thylakoid membrane. Its function is as follows. This b-type cytochrome is tightly associated with the reaction center of photosystem II (PSII). PSII is a light-driven water:plastoquinone oxidoreductase that uses light energy to abstract electrons from H(2)O, generating O(2) and a proton gradient subsequently used for ATP formation. It consists of a core antenna complex that captures photons, and an electron transfer chain that converts photonic excitation into a charge separation. This Synechococcus elongatus (strain ATCC 33912 / PCC 7942 / FACHB-805) (Anacystis nidulans R2) protein is Cytochrome b559 subunit alpha.